A 273-amino-acid polypeptide reads, in one-letter code: Putative B3 domain-containing protein At5g58280 (273 aa).

Residues 127–218 constitute a DNA-binding region (TF-B3); that stretch reads FVKSMVRSHV…KFKIYVFKGN (92 aa). The tract at residues 225 to 273 is disordered; the sequence is SARKRGRATTPSEEEEEEEDKDVEESGDEEHSSRATKRSSVRLLRKRKA. Over residues 236-252 the composition is skewed to acidic residues; sequence SEEEEEEEDKDVEESGD. Residues 258–273 are compositionally biased toward basic residues; it reads RATKRSSVRLLRKRKA.

It localises to the nucleus. The sequence is that of Putative B3 domain-containing protein At5g58280 from Arabidopsis thaliana (Mouse-ear cress).